The chain runs to 471 residues: UDP-N-acetylmuramate--L-alanine ligase (471 aa).

114–120 (GTHGKTT) lines the ATP pocket.

This sequence belongs to the MurCDEF family.

It localises to the cytoplasm. The catalysed reaction is UDP-N-acetyl-alpha-D-muramate + L-alanine + ATP = UDP-N-acetyl-alpha-D-muramoyl-L-alanine + ADP + phosphate + H(+). It functions in the pathway cell wall biogenesis; peptidoglycan biosynthesis. Cell wall formation. The sequence is that of UDP-N-acetylmuramate--L-alanine ligase from Rhizobium etli (strain ATCC 51251 / DSM 11541 / JCM 21823 / NBRC 15573 / CFN 42).